A 220-amino-acid polypeptide reads, in one-letter code: Splicing factor U2AF 26 kDa subunit (220 aa).

Alanine 2 carries the N-acetylalanine modification. The C3H1-type 1 zinc-finger motif lies at 12 to 40 (EKDKVNCSFYFKIGACRHGDRCSRLHNKP). The RRM domain maps to 65 to 147 (SHCHVSDVEV…QAVHAELSPV (83 aa)). The segment at 149-176 (DFRESCCRQYEMGECTRGGFCNFMHLRP) adopts a C3H1-type 2 zinc-finger fold. A disordered region spans residues 186-220 (YGRGPRHRSPPRSHTGHRPRERNRRRSPDHRHGRF). Residues 189-220 (GPRHRSPPRSHTGHRPRERNRRRSPDHRHGRF) show a composition bias toward basic residues.

This sequence belongs to the splicing factor SR family. Interacts with GFI1, U2AF2 and C1QBP. Isoform 3 interacts with PER1. In terms of processing, isoform 3 is rapidly degraded by a proteasome-mediated degradation pathway. Ubiquitous. Highly expressed in the brain.

The protein resides in the nucleus. Its subcellular location is the nucleus speckle. It localises to the cytoplasm. Its function is as follows. RNA-binding protein that function as a pre-mRNA splicing factor. Plays a critical role in both constitutive and enhancer-dependent splicing by mediating protein-protein interactions and protein-RNA interactions required for accurate 3'-splice site selection. It can functionally substitute for U2AF1 in constitutive splicing and enhancer-dependent splicing. Acts by enhancing the binding of U2AF2 to weak pyrimidine tracts. Also participates in the regulation of alternative pre-mRNA splicing. Activates exon 5 skipping of PTPRC during T-cell activation; an event reversed by GFI1. Binds to RNA at the AG dinucleotide at the 3'-splice site. Shows a preference for AGC or AGA. Alternative splicing of U2AF1L4 may play a role in connecting the circadian rhythm to changing external cues: may provide a circadian buffering system in central and periphery clocks that allows synchronized adaption to clock-resetting stimuli in order to prevent potentially pathogenic desynchronization. This chain is Splicing factor U2AF 26 kDa subunit (U2af1l4), found in Mus musculus (Mouse).